The following is a 360-amino-acid chain: NAD(P)H-quinone oxidoreductase subunit 1, chloroplastic (360 aa).

The next 8 membrane-spanning stretches (helical) occupy residues 27–47, 98–118, 129–149, 165–185, 203–223, 253–273, 297–317, and 340–360; these read IWIF…VLVI, FSIG…IIPF, IGIF…LMSG, AAQS…ISLL, FWGW…ISSL, FGLF…FVTV, IFGT…FLFI, and FLLP…LFSL.

The protein belongs to the complex I subunit 1 family. NDH is composed of at least 16 different subunits, 5 of which are encoded in the nucleus.

The protein resides in the plastid. The protein localises to the chloroplast thylakoid membrane. The enzyme catalyses a plastoquinone + NADH + (n+1) H(+)(in) = a plastoquinol + NAD(+) + n H(+)(out). It catalyses the reaction a plastoquinone + NADPH + (n+1) H(+)(in) = a plastoquinol + NADP(+) + n H(+)(out). NDH shuttles electrons from NAD(P)H:plastoquinone, via FMN and iron-sulfur (Fe-S) centers, to quinones in the photosynthetic chain and possibly in a chloroplast respiratory chain. The immediate electron acceptor for the enzyme in this species is believed to be plastoquinone. Couples the redox reaction to proton translocation, and thus conserves the redox energy in a proton gradient. This is NAD(P)H-quinone oxidoreductase subunit 1, chloroplastic from Lobularia maritima (Sweet alyssum).